Reading from the N-terminus, the 355-residue chain is Aromatic amino acid aminotransferase (355 aa).

Position 217 is an N6-(pyridoxal phosphate)lysine (Lys-217).

It belongs to the class-II pyridoxal-phosphate-dependent aminotransferase family. As to quaternary structure, homodimer. Requires pyridoxal 5'-phosphate as cofactor.

It carries out the reaction an aromatic L-alpha-amino acid + 2-oxoglutarate = an aromatic oxo-acid + L-glutamate. Its function is as follows. Aminotransferase that catalyzes the conversion of aromatic amino acids and 2-oxoglutarate into corresponding aromatic oxo acids and L-glutamate. This Mycobacterium avium (strain 104) protein is Aromatic amino acid aminotransferase.